The following is a 577-amino-acid chain: Acyl-coenzyme A synthetase ACSM1, mitochondrial (577 aa).

A mitochondrion-targeting transit peptide spans 1-31 (MQWLMRFRTLWGIHKSFHNIHPAPSQLRCRS). Lys85 carries the post-translational modification N6-succinyllysine. Lys146 bears the N6-acetyllysine; alternate mark. Lys146 bears the N6-succinyllysine; alternate mark. Lys183 bears the N6-succinyllysine mark. Residue Lys204 is modified to N6-acetyllysine; alternate. Lys204 is subject to N6-succinyllysine; alternate. An N6-acetyllysine modification is found at Lys214. Residue 226 to 234 (TSGTTGFPK) coordinates ATP. Lys237 carries the N6-succinyllysine modification. An N6-acetyllysine; alternate mark is found at Lys356 and Lys391. N6-succinyllysine; alternate occurs at positions 356 and 391. ATP is bound by residues Asp452 and Arg467. Position 531 is an N6-acetyllysine (Lys531). The residue at position 538 (Lys538) is an N6-acetyllysine; alternate. N6-succinyllysine; alternate is present on Lys538. Position 549 is an N6-acetyllysine (Lys549). Lys563 contacts ATP.

This sequence belongs to the ATP-dependent AMP-binding enzyme family. As to quaternary structure, monomer. It depends on Mg(2+) as a cofactor. Requires Mn(2+) as cofactor.

The protein localises to the mitochondrion matrix. It localises to the mitochondrion. It catalyses the reaction a medium-chain fatty acid + ATP + CoA = a medium-chain fatty acyl-CoA + AMP + diphosphate. The catalysed reaction is benzoate + ATP + CoA = benzoyl-CoA + AMP + diphosphate. It carries out the reaction (R)-lipoate + GTP + H(+) = (R)-lipoyl-GMP + diphosphate. The enzyme catalyses octanoate + ATP + CoA = octanoyl-CoA + AMP + diphosphate. It catalyses the reaction decanoate + ATP + CoA = decanoyl-CoA + AMP + diphosphate. The catalysed reaction is dodecanoate + ATP + CoA = dodecanoyl-CoA + AMP + diphosphate. It carries out the reaction tetradecanoate + ATP + CoA = tetradecanoyl-CoA + AMP + diphosphate. The enzyme catalyses hexanoate + ATP + CoA = hexanoyl-CoA + AMP + diphosphate. It catalyses the reaction butanoate + ATP + CoA = butanoyl-CoA + AMP + diphosphate. The catalysed reaction is hexadecanoate + ATP + CoA = hexadecanoyl-CoA + AMP + diphosphate. Activated by monovalent cations, such as potassium, rubidium or ammonium. In terms of biological role, catalyzes the activation of fatty acids by CoA to produce an acyl-CoA, the first step in fatty acid metabolism. Capable of activating medium-chain fatty acids (e.g. butyric (C4) to decanoic (C10) acids), and certain carboxylate-containing xenobiotics, e.g. benzoate. Also catalyzes the activation of lipoate to lipoyl-nucleoside monophosphate. Activates lipoate with GTP at a 1000-fold higher rate than with ATP and activates both (R)- and (S)-lipoate to the respective lipoyl-GMP, with a preference for (R)-lipoate. This is Acyl-coenzyme A synthetase ACSM1, mitochondrial (ACSM1) from Homo sapiens (Human).